The chain runs to 903 residues: Protein translocase subunit SecA (903 aa).

ATP contacts are provided by residues Q89, 107–111, and D502; that span reads GEGKT. Zn(2+) is bound by residues C886, C888, C897, and H898.

It belongs to the SecA family. As to quaternary structure, monomer and homodimer. Part of the essential Sec protein translocation apparatus which comprises SecA, SecYEG and auxiliary proteins SecDF-YajC and YidC. Zn(2+) serves as cofactor.

The protein localises to the cell inner membrane. It localises to the cytoplasm. The catalysed reaction is ATP + H2O + cellular proteinSide 1 = ADP + phosphate + cellular proteinSide 2.. Functionally, part of the Sec protein translocase complex. Interacts with the SecYEG preprotein conducting channel. Has a central role in coupling the hydrolysis of ATP to the transfer of proteins into and across the cell membrane, serving both as a receptor for the preprotein-SecB complex and as an ATP-driven molecular motor driving the stepwise translocation of polypeptide chains across the membrane. The protein is Protein translocase subunit SecA of Sinorhizobium medicae (strain WSM419) (Ensifer medicae).